Consider the following 135-residue polypeptide: Flagellar assembly factor FliW 1 (135 aa).

This sequence belongs to the FliW family. As to quaternary structure, interacts with translational regulator CsrA and flagellin(s).

The protein resides in the cytoplasm. In terms of biological role, acts as an anti-CsrA protein, binds CsrA and prevents it from repressing translation of its target genes, one of which is flagellin. Binds to flagellin and participates in the assembly of the flagellum. The sequence is that of Flagellar assembly factor FliW 1 from Helicobacter pylori (strain HPAG1).